Reading from the N-terminus, the 60-residue chain is Acidic phospholipase A2 (60 aa).

3 residues coordinate Ca(2+): Tyr-27, Gly-29, and Gly-31. Cys-28 and Cys-44 are joined by a disulfide. The active site involves His-47. Asp-48 provides a ligand contact to Ca(2+).

It belongs to the phospholipase A2 family. Group II subfamily. D49 sub-subfamily. In terms of assembly, monomer. The cofactor is Ca(2+). In terms of tissue distribution, expressed by the venom gland.

The protein localises to the secreted. It catalyses the reaction a 1,2-diacyl-sn-glycero-3-phosphocholine + H2O = a 1-acyl-sn-glycero-3-phosphocholine + a fatty acid + H(+). In terms of biological role, snake venom phospholipase A2 (PLA2) that exhibits an indirect hemolytic activity, a low myotoxicity, and induces edema. In addition, this enzyme has been shown to induce the release of some pro- and anti-inflammatory cytokines from human PBMC (IL12B, TNF-alpha, IL1B and IL6 but not variation has been observed for IL-8 and IL-10). PLA2 catalyzes the calcium-dependent hydrolysis of the 2-acyl groups in 3-sn-phosphoglycerides. The protein is Acidic phospholipase A2 of Bothrops leucurus (Whitetail lancehead).